Consider the following 199-residue polypeptide: Cytochrome c-type cyt cy (199 aa).

A helical membrane pass occupies residues isoleucine 7–leucine 27. Positions alanine 69–glutamate 80 are enriched in low complexity. The interval alanine 69–aspartate 93 is disordered. Heme c is bound by residues cysteine 112, cysteine 115, histidine 116, and methionine 148.

In terms of processing, binds 1 heme c group covalently per subunit.

It is found in the cell membrane. Electron transfer pathways that operates during photosynthesis. This chain is Cytochrome c-type cyt cy (cycY), found in Rhodobacter capsulatus (strain ATCC BAA-309 / NBRC 16581 / SB1003).